The sequence spans 614 residues: Vitamin B12 transporter BtuB (614 aa).

The signal sequence occupies residues 1-20 (MIKKASLLTACSVTAFSAWA). Over 21-157 (QDTSPDTLVV…NIITTRDEPG (137 aa)) the chain is Periplasmic. The short motif at 26-33 (DTLVVTAN) is the TonB box element. One can recognise a TBDR plug domain in the interval 38–152 (PRSTVLAPTT…IGGVVNIITT (115 aa)). Residues Leu-83, Ser-85, Asn-92, and 110–111 (VS) each bind cyanocob(III)alamin. In terms of domain architecture, TBDR beta-barrel spans 155 to 614 (EPGTEISAGW…EYTLSGSYTF (460 aa)). Residues 158 to 165 (TEISAGWG) form a beta stranded membrane-spanning segment. The Extracellular portion of the chain corresponds to 166 to 168 (SNS). Residues 169–178 (YQNYDVSTQQ) traverse the membrane as a beta stranded segment. The Periplasmic portion of the chain corresponds to 179–183 (QLGDK). A beta stranded transmembrane segment spans residues 184–195 (TRVTLLGDYAHT). Over 196 to 216 (HGYDVVAYGNTGTQAQTDNDG) the chain is Extracellular. Ca(2+)-binding residues include Asp-199, Gln-211, Asp-213, and Asp-215. The chain crosses the membrane as a beta stranded span at residues 217 to 227 (FLSKTLYGALE). Topologically, residues 228–231 (HNFT) are periplasmic. The beta stranded transmembrane segment at 232–248 (DAWSGFVRGYGYDNRTN) threads the bilayer. Ca(2+) is bound by residues Tyr-249 and Asp-250. At 249 to 262 (YDAYYSPGSPLLDT) the chain is on the extracellular side. Ala-251 provides a ligand contact to cyanocob(III)alamin. Asp-261 is a binding site for Ca(2+). A beta stranded transmembrane segment spans residues 263–277 (RKLYSQSWDAGLRYN). Gly-278 is a topological domain (periplasmic). A beta stranded membrane pass occupies residues 279 to 296 (ELIKSQLITSYSHSKDYN). The Extracellular segment spans residues 297–308 (YDPHYGRYDSSA). Thr-309 serves as a coordination point for cyanocob(III)alamin. Residues 309 to 325 (TLDEMKQYTVQWANNVI) traverse the membrane as a beta stranded segment. The Periplasmic segment spans residues 326–327 (VG). Residues 328–337 (HGSIGAGVDW) traverse the membrane as a beta stranded segment. Topologically, residues 338–352 (QKQTTTPGTGYVEDG) are extracellular. A beta stranded transmembrane segment spans residues 353 to 369 (YDQRNTGIYLTGLQQVG). Residue Asp-370 is a topological domain, periplasmic. A beta stranded transmembrane segment spans residues 371 to 381 (FTFEGAARSDD). Residues 382–384 (NSQ) lie on the Extracellular side of the membrane. Residues 385 to 400 (FGRHGTWQTSAGWEFI) traverse the membrane as a beta stranded segment. Over 401-402 (EG) the chain is Periplasmic. Residues 403–417 (YRFIASYGTSYKAPN) traverse the membrane as a beta stranded segment. Residues 418-433 (LGQLYGFYGNPNLDPE) are Extracellular-facing. Residues 434 to 443 (KSKQWEGAFE) traverse the membrane as a beta stranded segment. The Periplasmic segment spans residues 444-448 (GLTAG). Residues 449–458 (VNWRISGYRN) form a beta stranded membrane-spanning segment. Residues 459–472 (DVSDLIDYDDHTLK) lie on the Extracellular side of the membrane. The chain crosses the membrane as a beta stranded span at residues 473-490 (YYNEGKARIKGVEATANF). The Periplasmic segment spans residues 491 to 493 (DTG). A beta stranded transmembrane segment spans residues 494 to 509 (PLTHTVSYDYVDARNA). Over 510-516 (ITDTPLL) the chain is Extracellular. Arg-517 is a cyanocob(III)alamin binding site. Residues 517 to 529 (RRAKQQVKYQLDW) form a beta stranded membrane-spanning segment. Topologically, residues 530–534 (QLYDF) are periplasmic. A beta stranded transmembrane segment spans residues 535-550 (DWGITYQYLGTRYDKD). Tyr-551 contacts cyanocob(III)alamin. Residues 551–557 (YSSYPYQ) are Extracellular-facing. Residues 558-572 (TVKMGGVSLWDLAVA) traverse the membrane as a beta stranded segment. At 573 to 584 (YPVTSHLTVRGK) the chain is on the periplasmic side. A beta stranded membrane pass occupies residues 585–596 (IANLFDKDYETV). Topologically, residues 597 to 601 (YGYQT) are extracellular. The TonB C-terminal box motif lies at 597-614 (YGYQTAGREYTLSGSYTF). The chain crosses the membrane as a beta stranded span at residues 602–614 (AGREYTLSGSYTF).

Belongs to the TonB-dependent receptor family. BtuB (TC 1.B.14.3.1) subfamily. Interacts with TonB. As to quaternary structure, (Microbial infection) The hairpin motif of the receptor-binding domain of colicin E3 (ColE3) interacts with BtuB without displacing BtuB's central plug. An N-terminal fragment of E3 binds OmpF; trimeric complexes with ColE3, BtuB and OmpF can be cross-linked and immunoprecipitated.

It is found in the cell outer membrane. With respect to regulation, calcium increases vitamin B12 binding affinity by a factor of 50-100. Its activity is regulated as follows. (Microbial infection) Colicins E1, E3 and K inhibit cyanocobalamin (CN-B12) uptake; E1 and E3 inhibit binding of CN-B12 to cells while colicin K inhibits a later, energy-dependent step of CN-B12. In terms of biological role, involved in the active translocation of vitamin B12 (cyanocobalamin) across the outer membrane to the periplasmic space. It derives its energy for transport by interacting with the trans-periplasmic membrane protein TonB. (Microbial infection) Acts as a receptor for bacteriophages BF23 and C1, and for A and E colicins. Cyanocobalamin (CN-B12) in solid medium protects against colicins E1 and E3. Does not act as the translocon for colicin E3 (ColE3). The translocon is OmpF; trimeric complexes with ColE3, BtuB and OmpF can be cross-linked and immunoprecipitated. This is Vitamin B12 transporter BtuB from Escherichia coli (strain K12).